We begin with the raw amino-acid sequence, 191 residues long: Elongation factor P 1 (191 aa).

It belongs to the elongation factor P family.

It localises to the cytoplasm. It functions in the pathway protein biosynthesis; polypeptide chain elongation. Functionally, involved in peptide bond synthesis. Stimulates efficient translation and peptide-bond synthesis on native or reconstituted 70S ribosomes in vitro. Probably functions indirectly by altering the affinity of the ribosome for aminoacyl-tRNA, thus increasing their reactivity as acceptors for peptidyl transferase. In Lactobacillus acidophilus (strain ATCC 700396 / NCK56 / N2 / NCFM), this protein is Elongation factor P 1.